We begin with the raw amino-acid sequence, 396 residues long: Tryptophan synthase beta chain (396 aa).

Position 88 is an N6-(pyridoxal phosphate)lysine (K88).

Belongs to the TrpB family. As to quaternary structure, tetramer of two alpha and two beta chains. Pyridoxal 5'-phosphate serves as cofactor.

It carries out the reaction (1S,2R)-1-C-(indol-3-yl)glycerol 3-phosphate + L-serine = D-glyceraldehyde 3-phosphate + L-tryptophan + H2O. The protein operates within amino-acid biosynthesis; L-tryptophan biosynthesis; L-tryptophan from chorismate: step 5/5. Functionally, the beta subunit is responsible for the synthesis of L-tryptophan from indole and L-serine. In Actinobacillus pleuropneumoniae serotype 3 (strain JL03), this protein is Tryptophan synthase beta chain.